We begin with the raw amino-acid sequence, 416 residues long: UDP-N-acetylmuramoylalanine--D-glutamate ligase (416 aa).

104–110 (GSNGKST) contacts ATP.

It belongs to the MurCDEF family.

Its subcellular location is the cytoplasm. It catalyses the reaction UDP-N-acetyl-alpha-D-muramoyl-L-alanine + D-glutamate + ATP = UDP-N-acetyl-alpha-D-muramoyl-L-alanyl-D-glutamate + ADP + phosphate + H(+). It participates in cell wall biogenesis; peptidoglycan biosynthesis. Functionally, cell wall formation. Catalyzes the addition of glutamate to the nucleotide precursor UDP-N-acetylmuramoyl-L-alanine (UMA). The polypeptide is UDP-N-acetylmuramoylalanine--D-glutamate ligase (Francisella tularensis subsp. mediasiatica (strain FSC147)).